The primary structure comprises 215 residues: UPF0502 protein YceH (215 aa).

At lysine 80 the chain carries N6-acetyllysine.

Belongs to the UPF0502 family.

In Escherichia coli (strain K12 / MC4100 / BW2952), this protein is UPF0502 protein YceH.